Consider the following 361-residue polypeptide: UDP-N-acetylglucosamine--N-acetylmuramyl-(pentapeptide) pyrophosphoryl-undecaprenol N-acetylglucosamine transferase (361 aa).

UDP-N-acetyl-alpha-D-glucosamine contacts are provided by residues threonine 12–glycine 14, asparagine 123, arginine 166, serine 192, and glutamine 293.

Belongs to the glycosyltransferase 28 family. MurG subfamily.

The protein resides in the cell inner membrane. It carries out the reaction di-trans,octa-cis-undecaprenyl diphospho-N-acetyl-alpha-D-muramoyl-L-alanyl-D-glutamyl-meso-2,6-diaminopimeloyl-D-alanyl-D-alanine + UDP-N-acetyl-alpha-D-glucosamine = di-trans,octa-cis-undecaprenyl diphospho-[N-acetyl-alpha-D-glucosaminyl-(1-&gt;4)]-N-acetyl-alpha-D-muramoyl-L-alanyl-D-glutamyl-meso-2,6-diaminopimeloyl-D-alanyl-D-alanine + UDP + H(+). It participates in cell wall biogenesis; peptidoglycan biosynthesis. Its function is as follows. Cell wall formation. Catalyzes the transfer of a GlcNAc subunit on undecaprenyl-pyrophosphoryl-MurNAc-pentapeptide (lipid intermediate I) to form undecaprenyl-pyrophosphoryl-MurNAc-(pentapeptide)GlcNAc (lipid intermediate II). This Caulobacter vibrioides (strain ATCC 19089 / CIP 103742 / CB 15) (Caulobacter crescentus) protein is UDP-N-acetylglucosamine--N-acetylmuramyl-(pentapeptide) pyrophosphoryl-undecaprenol N-acetylglucosamine transferase.